Here is a 732-residue protein sequence, read N- to C-terminus: TIR domain-containing adapter molecule 1 (732 aa).

The segment at 1–153 (MDNPGPSLRG…CSSDIKGDPS (153 aa)) is TRIF-NTD. A TRAF6-binding motif is present at residues 84-91 (EGPEEPPD). Residues 144 to 191 (CSSDIKGDPSGFQPLHSHQGSLQPPSASPAVTRSQPRPIDTPDWSWGH) form a disordered region. Positions 159 to 178 (HSHQGSLQPPSASPAVTRSQ) are enriched in polar residues. A pLxIS motif motif is present at residues 206 to 209 (LEIS). S209 carries the post-translational modification Phosphoserine. K228 participates in a covalent cross-link: Glycyl lysine isopeptide (Lys-Gly) (interchain with G-Cter in ubiquitin). Short sequence motifs (TRAF6-binding) lie at residues 247 to 254 (QEPEEISW) and 296 to 306 (HCPIECTELST). The segment covering 305 to 331 (STNSRSPLTSTTESVGKQWPITSQRSP) has biased composition (polar residues). Positions 305–389 (STNSRSPLTS…TSTSPVLDHS (85 aa)) are disordered. Low complexity predominate over residues 345–359 (SSSPPAQPPSLQASP). The TIR domain occupies 395–534 (KFYNFVVIHA…KVANTFKTQK (140 aa)). Residues 514 to 713 (WLDEHSPIFA…SSDDKTECSE (200 aa)) form a sufficient to induce apoptosis region. Disordered regions lie at residues 603 to 679 (TPSW…GPQP) and 696 to 732 (MWGHTGAQSSDDKTECSENPCMGPLTDQGEPLLETPE). Pro residues-rich tracts occupy residues 604–615 (PSWPGCPQPIPS) and 625–657 (PYSPQPPSFPQPPCFPQPPSFPQPPSFPLPPVS). Positions 658–671 (SPQSQSFPSASSPA) are enriched in low complexity.

As to quaternary structure, homodimer. Found in a multi-helicase-TICAM1 complex at least composed of DHX36, DDX1, DDX21 and TICAM1; this complex exists in resting cells with or without poly(I:C) RNA ligand stimulation. Interacts (via TIR domain) with DDX21 (via C-terminus). Interacts (via TIR domain) with DHX36 (via C-terminus). Interacts with AZI2 and IRF7. Interacts (when phosphorylated) with IRF3; following activation and phosphorylation on the pLxIS motif by TBK1, recruits IRF3. Interacts with TICAM2 in TLR4 recruitment. Interaction with PIAS4 inhibits the TICAM1-induced NF-kappa-B, IRF and IFNB1 activation. Interacts with IKBKB and IKBKE. Interaction with SARM1 blocks TICAM1-dependent transcription factor activation. Interacts with TRAF3. Interacts with TRAFD1. Interacts with UBQLN1 (via UBA domain). Interacts with TBK1, TRAF6 and RIPK1 and these interactions are enhanced in the presence of WDFY1. Interacts (via the TIR domain) with TLR3 in response to poly(I:C) and this interaction is enhanced in the presence of WDFY1. Interacts with TLR4 in response to poly(I:C) in a WDFY1-dependent manner. Interacts with WDFY1 in response to poly(I:C). Interacts with TRIM56. Interacts (via the TIR domain) with TLR5. Interacts with TRIM8. Interacts with TAX1BP1 and TRIM32; these interactions target TICAM1 to TAX1BP1-mediated selective autophagic degradation. Interacts with DDX50. Phosphorylated by TBK1. Following activation, phosphorylated by TBK1 at Ser-209 in the pLxIS motif. The phosphorylated pLxIS motif constitutes an IRF3-binding motif, leading to recruitment of the transcription factor IRF3 to induce type-I interferons and other cytokines. Post-translationally, polyubiquitinated at Lys-228 by TRIM38 with 'Lys-48'-linked chains, leading to proteasomal degradation. Polyubiquitinated with 'Lys-6'- and 'Lys-33'-linked chains in a TRIM8-dependent manner; ubiquitination disrupts the interaction with TBK1 and subsequent interferon production.

It is found in the cytoplasm. Its subcellular location is the cytosol. The protein localises to the cytoplasmic vesicle. The protein resides in the autophagosome. It localises to the mitochondrion. Functionally, involved in innate immunity against invading pathogens. Adapter used by TLR3, TLR4 (through TICAM2) and TLR5 to mediate NF-kappa-B and interferon-regulatory factor (IRF) activation, and to induce apoptosis. Ligand binding to these receptors results in TRIF recruitment through its TIR domain. Distinct protein-interaction motifs allow recruitment of the effector proteins TBK1, TRAF6 and RIPK1, which in turn, lead to the activation of transcription factors IRF3 and IRF7, NF-kappa-B and FADD respectively. Phosphorylation by TBK1 on the pLxIS motif leads to recruitment and subsequent activation of the transcription factor IRF3 to induce expression of type I interferon and exert a potent immunity against invading pathogens. Component of a multi-helicase-TICAM1 complex that acts as a cytoplasmic sensor of viral double-stranded RNA (dsRNA) and plays a role in the activation of a cascade of antiviral responses including the induction of pro-inflammatory cytokines. This chain is TIR domain-containing adapter molecule 1 (Ticam1), found in Mus musculus (Mouse).